Consider the following 302-residue polypeptide: Acetaldehyde dehydrogenase 2 (302 aa).

Catalysis depends on cysteine 130, which acts as the Acyl-thioester intermediate. Residues 161–169 and asparagine 272 each bind NAD(+); that span reads SVGPGTRRN.

This sequence belongs to the acetaldehyde dehydrogenase family.

The enzyme catalyses acetaldehyde + NAD(+) + CoA = acetyl-CoA + NADH + H(+). This is Acetaldehyde dehydrogenase 2 from Cupriavidus necator (strain ATCC 17699 / DSM 428 / KCTC 22496 / NCIMB 10442 / H16 / Stanier 337) (Ralstonia eutropha).